We begin with the raw amino-acid sequence, 217 residues long: 3,4-dihydroxy-2-butanone 4-phosphate synthase (217 aa).

D-ribulose 5-phosphate contacts are provided by residues 37 to 38 (RE), aspartate 42, 150 to 154 (RGGHT), and glutamate 174. Glutamate 38 contributes to the Mg(2+) binding site. Mg(2+) is bound at residue histidine 153.

This sequence belongs to the DHBP synthase family. As to quaternary structure, homodimer. The cofactor is Mg(2+). It depends on Mn(2+) as a cofactor.

The enzyme catalyses D-ribulose 5-phosphate = (2S)-2-hydroxy-3-oxobutyl phosphate + formate + H(+). Its pathway is cofactor biosynthesis; riboflavin biosynthesis; 2-hydroxy-3-oxobutyl phosphate from D-ribulose 5-phosphate: step 1/1. Functionally, catalyzes the conversion of D-ribulose 5-phosphate to formate and 3,4-dihydroxy-2-butanone 4-phosphate. The protein is 3,4-dihydroxy-2-butanone 4-phosphate synthase of Cronobacter sakazakii (strain ATCC BAA-894) (Enterobacter sakazakii).